We begin with the raw amino-acid sequence, 102 residues long: Co-chaperonin GroES (102 aa).

Belongs to the GroES chaperonin family. As to quaternary structure, heptamer of 7 subunits arranged in a ring. Interacts with the chaperonin GroEL.

It localises to the cytoplasm. Together with the chaperonin GroEL, plays an essential role in assisting protein folding. The GroEL-GroES system forms a nano-cage that allows encapsulation of the non-native substrate proteins and provides a physical environment optimized to promote and accelerate protein folding. GroES binds to the apical surface of the GroEL ring, thereby capping the opening of the GroEL channel. The protein is Co-chaperonin GroES of Chlamydia pneumoniae (Chlamydophila pneumoniae).